Reading from the N-terminus, the 1715-residue chain is Neurexin-2 (1715 aa).

The first 29 residues, 1–29, serve as a signal peptide directing secretion; sequence MALGSRWRPPPQLPPLLLLLALVAGVRGL. A Laminin G-like 1 domain is found at 30-206; the sequence is EFGGGPGQWA…LRGAAADPLC (177 aa). The Extracellular segment spans residues 30–1639; that stretch reads EFGGGPGQWA…EVIRESSSTT (1610 aa). N-linked (GlcNAc...) asparagine glycosylation occurs at Asn60. One can recognise an EGF-like 1 domain in the interval 202–242; that stretch reads ADPLCAPARNPCANGGLCTVLAPGEVGCDCSHTGFGGKFCS. 3 disulfides stabilise this stretch: Cys206/Cys219, Cys213/Cys229, and Cys231/Cys241. 2 consecutive Laminin G-like domains span residues 289-486 and 493-686; these read VATF…SFRC and DPVT…APFC. Ca(2+) is bound at residue Asp335. N-linked (GlcNAc...) asparagine glycosylation is present at Asn338. 2 residues coordinate Ca(2+): Leu352 and Met420. 5 disulfide bridges follow: Cys450-Cys486, Cys657-Cys686, Cys694-Cys705, Cys699-Cys714, and Cys716-Cys726. In terms of domain architecture, EGF-like 2 spans 690-727; the sequence is TLKQCASAPCRNGGICREGWNRFVCDCIGTGFLGRVCE. 2 consecutive Laminin G-like domains span residues 732-907 and 921-1096; these read VLSY…ITYC and DPVT…ERGC. The Ca(2+) site is built by Asp779 and Leu796. An N-linked (GlcNAc...) asparagine glycan is attached at Asn844. Arg857 is a Ca(2+) binding site. Cystine bridges form between Cys1068/Cys1096, Cys1103/Cys1114, Cys1108/Cys1123, and Cys1125/Cys1135. Residues 1099-1136 enclose the EGF-like 3 domain; it reads PSTTCTEESCANQGVCLQQWDGFTCDCTMTSYGGPVCN. Residues 1140-1348 form the Laminin G-like 6 domain; that stretch reads TTYIFGKGGA…HLRLVGEGPS (209 aa). 2 residues coordinate Ca(2+): Asp1192 and Val1209. An N-linked (GlcNAc...) asparagine glycan is attached at Asn1239. Positions 1291 and 1293 each coordinate Ca(2+). O-linked (Xyl...) (heparan sulfate) serine glycosylation is present at Ser1403. Disordered stretches follow at residues 1461–1511, 1529–1549, and 1583–1626; these read ATQD…LPPT, LLSP…ATGA, and LGPG…RGPP. The helical transmembrane segment at 1640 to 1660 threads the bilayer; the sequence is GMVVGIVAAAALCILILLYAM. Over 1661–1715 the chain is Cytoplasmic; that stretch reads YKYRNRDEGSYQVDQSRNYISNSAQSNGAVVKEKAPAAPKTPSKAKKNKDKEYYV. Positions 1682 to 1715 are disordered; the sequence is NSAQSNGAVVKEKAPAAPKTPSKAKKNKDKEYYV.

Belongs to the neurexin family. The laminin G-like domain 1 binds to NXPH1. Interacts with PATJ. Interacts with CBLN1, CBLN2 and, less avidly, with CBLN4. Specific isoforms bind neuroligins NLGN1, NLGN2 and NLGN3. Isoform 5c/alpha-2C binds to alpha-dystroglycan. Interacts (via Laminin G-like 1 domain) with IGSF21 (Ig-like 1 domain) in a trans-interaction manner. Interacts with CLSTN3. In terms of processing, O-glycosylated; contains heparan sulfate. Heparan sulfate attachment is required for synapse development by mediating interactions with neuroligins. As to expression, brain (neuronal synapse).

The protein resides in the presynaptic cell membrane. Neuronal cell surface protein that may be involved in cell recognition and cell adhesion. May mediate intracellular signaling. The chain is Neurexin-2 (Nrxn2) from Rattus norvegicus (Rat).